The primary structure comprises 295 residues: Putative aquaporin-12A (295 aa).

A helical transmembrane segment spans residues Met-1–Ala-21. Residues Arg-22–Asp-54 are Extracellular-facing. Residues Phe-55–Leu-75 traverse the membrane as a helical segment. At Asp-76–Thr-99 the chain is on the cytoplasmic side. An intramembrane region (discontinuously helical) is located at residues Gly-77–Cys-114. Residues Asn-81–Thr-83 carry the NPA 1 motif. The chain crosses the membrane as a helical span at residues Leu-100–Ser-126. Residues Asp-127–Thr-145 are Extracellular-facing. The helical transmembrane segment at Ser-146–Leu-166 threads the bilayer. The Cytoplasmic segment spans residues His-167–Pro-178. A helical transmembrane segment spans residues Ala-179–Phe-199. An intramembrane region (discontinuously helical) is located at residues Thr-195–Ser-206. Residues Asn-200–Ala-202 carry the NPA 2 motif. At Asn-200–Thr-215 the chain is on the extracellular side. The helical transmembrane segment at Leu-216–Leu-236 threads the bilayer. Over Leu-237 to Ser-295 the chain is Cytoplasmic. Residues Lys-257–Ser-295 form a disordered region.

It belongs to the MIP/aquaporin (TC 1.A.8) family. AQP11/AQP12 subfamily. In terms of assembly, homotetramer; each monomer provides an independent water pore. In terms of tissue distribution, restricted to the pancreas.

Its subcellular location is the membrane. It carries out the reaction H2O(in) = H2O(out). Functionally, putative aquaporin. Could form homotetrameric transmembrane channels, with each monomer independently mediating water transport across the plasma membrane along its osmotic gradient. In Homo sapiens (Human), this protein is Putative aquaporin-12A.